The sequence spans 182 residues: Ribosome maturation factor RimM (182 aa).

The 80-residue stretch at 103–182 (DGSYYWKDLM…TIEVDWDPGF (80 aa)) folds into the PRC barrel domain.

It belongs to the RimM family. In terms of assembly, binds ribosomal protein uS19.

The protein localises to the cytoplasm. Functionally, an accessory protein needed during the final step in the assembly of 30S ribosomal subunit, possibly for assembly of the head region. Essential for efficient processing of 16S rRNA. May be needed both before and after RbfA during the maturation of 16S rRNA. It has affinity for free ribosomal 30S subunits but not for 70S ribosomes. In Citrobacter koseri (strain ATCC BAA-895 / CDC 4225-83 / SGSC4696), this protein is Ribosome maturation factor RimM.